We begin with the raw amino-acid sequence, 82 residues long: ATP synthase subunit c, chloroplastic (82 aa).

Transmembrane regions (helical) follow at residues 3-23 (PIVA…AAIG) and 57-77 (FAFM…LLFA).

Belongs to the ATPase C chain family. As to quaternary structure, F-type ATPases have 2 components, F(1) - the catalytic core - and F(0) - the membrane proton channel. F(1) has five subunits: alpha(3), beta(3), gamma(1), delta(1), epsilon(1). F(0) has four main subunits: a(1), b(1), b'(1) and c(10-14). The alpha and beta chains form an alternating ring which encloses part of the gamma chain. F(1) is attached to F(0) by a central stalk formed by the gamma and epsilon chains, while a peripheral stalk is formed by the delta, b and b' chains.

It localises to the plastid. The protein localises to the chloroplast thylakoid membrane. F(1)F(0) ATP synthase produces ATP from ADP in the presence of a proton or sodium gradient. F-type ATPases consist of two structural domains, F(1) containing the extramembraneous catalytic core and F(0) containing the membrane proton channel, linked together by a central stalk and a peripheral stalk. During catalysis, ATP synthesis in the catalytic domain of F(1) is coupled via a rotary mechanism of the central stalk subunits to proton translocation. Its function is as follows. Key component of the F(0) channel; it plays a direct role in translocation across the membrane. A homomeric c-ring of between 10-14 subunits forms the central stalk rotor element with the F(1) delta and epsilon subunits. This chain is ATP synthase subunit c, chloroplastic, found in Tetradesmus obliquus (Green alga).